The chain runs to 517 residues: Crotonobetaine/carnitine--CoA ligase (517 aa).

The protein belongs to the ATP-dependent AMP-binding enzyme family.

The catalysed reaction is 4-(trimethylamino)butanoate + ATP + CoA = 4-(trimethylamino)butanoyl-CoA + AMP + diphosphate. It carries out the reaction crotonobetaine + ATP + CoA = crotonobetainyl-CoA + AMP + diphosphate. It catalyses the reaction (R)-carnitine + ATP + CoA = (R)-carnitinyl-CoA + AMP + diphosphate. It functions in the pathway amine and polyamine metabolism; carnitine metabolism. In terms of biological role, catalyzes the transfer of CoA to carnitine, generating the initial carnitinyl-CoA needed for the CaiB reaction cycle. Also has activity toward crotonobetaine and gamma-butyrobetaine. This is Crotonobetaine/carnitine--CoA ligase from Escherichia coli O8 (strain IAI1).